The sequence spans 21 residues: Buforin-2 (21 aa).

Residue Lys-21 is modified to N6-(2-hydroxyisobutyryl)lysine; alternate.

The protein belongs to the histone H2A family. In terms of tissue distribution, expressed by the skin glands.

It is found in the secreted. Antimicrobial peptide with potent activity against some Gram-positive and Gram-negative bacteria. Does not permeabilize membrane, but internalizes into bacterial cells and alter specific gene expression involved in bacterial resistance mechanisms. Has the ability to agglutinate E.coli, and lipid vesicles. Shows a weak hemolytic activity, and is not cytotoxic to monocytes. The sequence is that of Buforin-2 from Sphaenorhynchus lacteus (Orinoco lime treefrog).